A 509-amino-acid polypeptide reads, in one-letter code: Protein disulfide-isomerase (509 aa).

Positions 1–19 are cleaved as a signal peptide; it reads MLSRALLCLALAWAARVGA. One can recognise a Thioredoxin 1 domain in the interval 20–136; it reads DALEEEDNVL…IVNWLKKRTG (117 aa). Active-site nucleophile residues include Cys-55 and Cys-58. Cys-55 and Cys-58 are oxidised to a cystine. Lys-202 carries the post-translational modification N6-acetyllysine. Lys-224 and Lys-273 each carry N6-succinyllysine. A phosphoserine mark is found at Ser-333 and Ser-359. The Thioredoxin 2 domain occupies 335 to 477; it reads ELTAEKITQF…FKKFLESGGQ (143 aa). Residues Cys-399 and Cys-402 each act as nucleophile in the active site. Cys-399 and Cys-402 are disulfide-bonded. Ser-429 carries the post-translational modification Phosphoserine. Positions 506 to 509 match the Prevents secretion from ER motif; that stretch reads KDEL.

The protein belongs to the protein disulfide isomerase family. In terms of assembly, heterodimer; heterodimerizes with the protein microsomal triglyceride transfer MTTP. Homodimer. Monomers and homotetramers may also occur. Interacts with P4HA2, forming a heterotetramer consisting of 2 alpha subunits (P4HA2) and 2 beta (P4HB), where P4HB plays the role of a structural subunit; this tetramer catalyzes the formation of 4-hydroxyproline in collagen. Also constitutes the structural subunit of the microsomal triacylglycerol transfer protein MTTP in mammalian cells. Stabilizes both enzymes and retain them in the ER without contributing to the catalytic activity. Binds UBQLN1. Interacts with ERO1B. Interacts with ILDR2. Interacts with ERN1/IRE1A (via N-terminus); the interaction is enhanced by phosphorylation of P4HB by FAM20C in response to endoplasmic reticulum stress and results in attenuation of ERN1 activity. Post-translationally, phosphorylation of Ser-359 by FAM20C is induced by endoplasmic reticulum stress and results in a functional switch from oxidoreductase to molecular chaperone. It also promotes interaction with ERN1.

The protein localises to the endoplasmic reticulum. It is found in the endoplasmic reticulum lumen. It localises to the melanosome. Its subcellular location is the cell membrane. The catalysed reaction is Catalyzes the rearrangement of -S-S- bonds in proteins.. Its function is as follows. This multifunctional protein catalyzes the formation, breakage and rearrangement of disulfide bonds. At the cell surface, seems to act as a reductase that cleaves disulfide bonds of proteins attached to the cell. May therefore cause structural modifications of exofacial proteins. Inside the cell, seems to form/rearrange disulfide bonds of nascent proteins. At high concentrations and following phosphorylation by FAM20C, functions as a chaperone that inhibits aggregation of misfolded proteins. At low concentrations, facilitates aggregation (anti-chaperone activity). May be involved with other chaperones in the structural modification of the TG precursor in hormone biogenesis. Also acts as a structural subunit of various enzymes such as prolyl 4-hydroxylase and microsomal triacylglycerol transfer protein MTTP. Receptor for LGALS9; the interaction retains P4HB at the cell surface of Th2 T helper cells, increasing disulfide reductase activity at the plasma membrane, altering the plasma membrane redox state and enhancing cell migration. This Rattus norvegicus (Rat) protein is Protein disulfide-isomerase (P4hb).